Reading from the N-terminus, the 197-residue chain is RNA pyrophosphohydrolase (197 aa).

The Nudix hydrolase domain occupies 6-149 (GYRPNVGIVI…KRDVYRRAMK (144 aa)). The Nudix box motif lies at 38–59 (GGINEGETPEQAMFRELFEEVG). A disordered region spans residues 170-197 (ETKKAETGKKQPYYHKYAPQNKKGRKRR).

Belongs to the Nudix hydrolase family. RppH subfamily. A divalent metal cation is required as a cofactor.

In terms of biological role, accelerates the degradation of transcripts by removing pyrophosphate from the 5'-end of triphosphorylated RNA, leading to a more labile monophosphorylated state that can stimulate subsequent ribonuclease cleavage. In Actinobacillus succinogenes (strain ATCC 55618 / DSM 22257 / CCUG 43843 / 130Z), this protein is RNA pyrophosphohydrolase.